Here is a 185-residue protein sequence, read N- to C-terminus: ATP-dependent protease subunit HslV (185 aa).

Thr-13 is an active-site residue. 3 residues coordinate Na(+): Gly-167, Cys-170, and Thr-173.

This sequence belongs to the peptidase T1B family. HslV subfamily. In terms of assembly, a double ring-shaped homohexamer of HslV is capped on each side by a ring-shaped HslU homohexamer. The assembly of the HslU/HslV complex is dependent on binding of ATP.

The protein resides in the cytoplasm. The catalysed reaction is ATP-dependent cleavage of peptide bonds with broad specificity.. Its activity is regulated as follows. Allosterically activated by HslU binding. Functionally, protease subunit of a proteasome-like degradation complex believed to be a general protein degrading machinery. This chain is ATP-dependent protease subunit HslV, found in Sinorhizobium medicae (strain WSM419) (Ensifer medicae).